A 318-amino-acid chain; its full sequence is NADH-quinone oxidoreductase subunit H 2 (318 aa).

The next 9 membrane-spanning stretches (helical) occupy residues 4–24 (LLIA…AGVF), 77–97 (LAPA…AFAP), 106–126 (VGVL…VLGA), 146–166 (LAYE…AGSF), 179–199 (LWFI…GLAA), 214–234 (LVAG…FLGE), 238–258 (ILLV…GPIL), 262–282 (IWFG…RAAL), and 293–313 (FAWK…AWIA).

Belongs to the complex I subunit 1 family. As to quaternary structure, NDH-1 is composed of 14 different subunits. Subunits NuoA, H, J, K, L, M, N constitute the membrane sector of the complex.

Its subcellular location is the cell inner membrane. It catalyses the reaction a quinone + NADH + 5 H(+)(in) = a quinol + NAD(+) + 4 H(+)(out). Functionally, NDH-1 shuttles electrons from NADH, via FMN and iron-sulfur (Fe-S) centers, to quinones in the respiratory chain. The immediate electron acceptor for the enzyme in this species is believed to be ubiquinone. Couples the redox reaction to proton translocation (for every two electrons transferred, four hydrogen ions are translocated across the cytoplasmic membrane), and thus conserves the redox energy in a proton gradient. This subunit may bind ubiquinone. In Cereibacter sphaeroides (strain ATCC 17023 / DSM 158 / JCM 6121 / CCUG 31486 / LMG 2827 / NBRC 12203 / NCIMB 8253 / ATH 2.4.1.) (Rhodobacter sphaeroides), this protein is NADH-quinone oxidoreductase subunit H 2.